A 160-amino-acid polypeptide reads, in one-letter code: Baculoviral IAP repeat-containing protein 5.1-B (160 aa).

The stretch at 13-83 (QRLQDFRNMY…EGWEPDDDPW (71 aa)) is one BIR repeat. The residue at position 43 (threonine 43) is a Phosphothreonine; by CDK1. Zn(2+)-binding residues include cysteine 66, cysteine 69, histidine 86, and cysteine 93.

This sequence belongs to the IAP family. In terms of assembly, component of the CPC at least composed of survivin/birc5, incenp, cdca8/borealin and/or cdca9/dasra-A, and aurkb/aurora-B. Interacts directly with incenp (via N-terminus), and may weakly interact with aurkb (via N-terminus) to stabilize the complex. Interacts with GTP-bound ran in both the S and M phases of the cell cycle. Also found in a complex with ubiquitin-mediated signaling proteins including at least usp9x/xFAM, nploc4/npl4 and ufd1. In terms of processing, ubiquitination is required for centrosome-targeting.

It localises to the cytoplasm. Its subcellular location is the nucleus. The protein localises to the chromosome. It is found in the centromere. The protein resides in the cytoskeleton. It localises to the spindle. Its function is as follows. Component of the chromosomal passenger complex (CPC), a complex that acts as a key regulator of mitosis. The CPC complex has essential functions at the centromere in ensuring correct chromosome alignment and segregation and is required for chromatin-induced microtubule stabilization and spindle assembly. Stimulates the mitotic kinase activity of aurkb/aurora-B in the CPC. Does not appear to exhibit anti-apoptotic activity. CPC. Does not appear to exhibit anti-apoptotic activity. This chain is Baculoviral IAP repeat-containing protein 5.1-B (birc5.1-b), found in Xenopus laevis (African clawed frog).